A 198-amino-acid chain; its full sequence is Large ribosomal subunit protein bL25 (198 aa).

Belongs to the bacterial ribosomal protein bL25 family. CTC subfamily. In terms of assembly, part of the 50S ribosomal subunit; part of the 5S rRNA/L5/L18/L25 subcomplex. Contacts the 5S rRNA. Binds to the 5S rRNA independently of L5 and L18.

Functionally, this is one of the proteins that binds to the 5S RNA in the ribosome where it forms part of the central protuberance. This chain is Large ribosomal subunit protein bL25, found in Nitrosomonas europaea (strain ATCC 19718 / CIP 103999 / KCTC 2705 / NBRC 14298).